Here is a 501-residue protein sequence, read N- to C-terminus: Cytochrome P450 81F4 (501 aa).

Lysine 245 participates in a covalent cross-link: Glycyl lysine isopeptide (Lys-Gly) (interchain with G-Cter in ubiquitin). Residues 285-305 traverse the membrane as a helical segment; that stretch reads IIIKGLMLGIMVASSETSALT. Cysteine 435 lines the heme pocket.

The protein belongs to the cytochrome P450 family. The cofactor is heme.

It localises to the membrane. The protein operates within secondary metabolite biosynthesis. In terms of biological role, involved in indole glucosinolate biosynthesis. Catalyzes hydroxylation reactions of the glucosinolate indole ring. Converts indol-3-yl-methylglucosinolate (I3M) to 1-hydroxy-indol-3-yl-methylglucosinolate (1OH-I3M) intermediate. This hydroxy intermediates is converted to 1-methoxy-indol-3-yl-methylglucosinolate (1MO-I3M) by indole glucosinolate methyltransferase 1 and 2 (IGMT1 and IGMT2). The chain is Cytochrome P450 81F4 from Arabidopsis thaliana (Mouse-ear cress).